The primary structure comprises 146 residues: Prefoldin subunit alpha 1 (146 aa).

The protein belongs to the prefoldin subunit alpha family. Heterohexamer of two alpha and four beta subunits.

Its subcellular location is the cytoplasm. Molecular chaperone capable of stabilizing a range of proteins. Seems to fulfill an ATP-independent, HSP70-like function in archaeal de novo protein folding. This is Prefoldin subunit alpha 1 from Thermococcus kodakarensis (strain ATCC BAA-918 / JCM 12380 / KOD1) (Pyrococcus kodakaraensis (strain KOD1)).